Here is a 176-residue protein sequence, read N- to C-terminus: Large ribosomal subunit protein uL10 (176 aa).

The protein belongs to the universal ribosomal protein uL10 family. Part of the ribosomal stalk of the 50S ribosomal subunit. The N-terminus interacts with L11 and the large rRNA to form the base of the stalk. The C-terminus forms an elongated spine to which L12 dimers bind in a sequential fashion forming a multimeric L10(L12)X complex.

Functionally, forms part of the ribosomal stalk, playing a central role in the interaction of the ribosome with GTP-bound translation factors. The polypeptide is Large ribosomal subunit protein uL10 (Leuconostoc citreum (strain KM20)).